Here is a 618-residue protein sequence, read N- to C-terminus: Uptake hydrogenase large subunit (618 aa).

Ni(2+) contacts are provided by Cys75, Cys78, Cys597, and Cys600.

It belongs to the [NiFe]/[NiFeSe] hydrogenase large subunit family. Heterodimer of a large and a small subunit. Requires Ni(2+) as cofactor.

It localises to the cell membrane. It carries out the reaction H2 + A = AH2. Its function is as follows. This enzyme recycles the H(2) produced by nitrogenase to increase the production of ATP and to protect nitrogenase against inhibition or damage by O(2) under carbon- or phosphate-limited conditions. The protein is Uptake hydrogenase large subunit (hupB) of Rubrivivax gelatinosus (Rhodocyclus gelatinosus).